Consider the following 205-residue polypeptide: Large ribosomal subunit protein uL18 (205 aa).

The protein belongs to the universal ribosomal protein uL18 family. Part of the 50S ribosomal subunit. Contacts the 5S and 23S rRNAs.

Functionally, this is one of the proteins that bind and probably mediate the attachment of the 5S RNA into the large ribosomal subunit, where it forms part of the central protuberance. This is Large ribosomal subunit protein uL18 from Pyrobaculum islandicum (strain DSM 4184 / JCM 9189 / GEO3).